The primary structure comprises 469 residues: Probable periplasmic serine endoprotease DegP-like (469 aa).

Residues 1 to 25 (MNRLLKQVCMVVVSSFMMASMLTHA) form the signal peptide. Catalysis depends on charge relay system residues His-114, Asp-144, and Ser-217. Substrate is bound by residues 215-217 (GNS) and 272-276 (LGVLI). PDZ domains are found at residues 261-352 (LKSD…YRDG) and 358-458 (SVTL…IRQG).

Belongs to the peptidase S1C family.

The protein resides in the periplasm. The enzyme catalyses Acts on substrates that are at least partially unfolded. The cleavage site P1 residue is normally between a pair of hydrophobic residues, such as Val-|-Val.. Its function is as follows. Might be efficient in the degradation of transiently denatured and unfolded proteins which accumulate in the periplasm following stress conditions. The polypeptide is Probable periplasmic serine endoprotease DegP-like (Marinomonas sp. (strain MWYL1)).